The primary structure comprises 296 residues: NAD kinase (296 aa).

Residue Asp72 is the Proton acceptor of the active site. NAD(+)-binding positions include 72-73 (DG), 146-147 (ND), Arg157, Lys174, Asp176, 187-192 (TAYALS), and Gln247.

Belongs to the NAD kinase family. Requires a divalent metal cation as cofactor.

The protein localises to the cytoplasm. It carries out the reaction NAD(+) + ATP = ADP + NADP(+) + H(+). Functionally, involved in the regulation of the intracellular balance of NAD and NADP, and is a key enzyme in the biosynthesis of NADP. Catalyzes specifically the phosphorylation on 2'-hydroxyl of the adenosine moiety of NAD to yield NADP. This chain is NAD kinase, found in Pseudomonas putida (strain W619).